The primary structure comprises 449 residues: UDP-N-acetylmuramoylalanine--D-glutamate ligase (449 aa).

Glycine 118–threonine 124 is a binding site for ATP.

The protein belongs to the MurCDEF family.

Its subcellular location is the cytoplasm. It catalyses the reaction UDP-N-acetyl-alpha-D-muramoyl-L-alanine + D-glutamate + ATP = UDP-N-acetyl-alpha-D-muramoyl-L-alanyl-D-glutamate + ADP + phosphate + H(+). Its pathway is cell wall biogenesis; peptidoglycan biosynthesis. Functionally, cell wall formation. Catalyzes the addition of glutamate to the nucleotide precursor UDP-N-acetylmuramoyl-L-alanine (UMA). The sequence is that of UDP-N-acetylmuramoylalanine--D-glutamate ligase from Staphylococcus aureus (strain MSSA476).